The following is a 473-amino-acid chain: Exodeoxyribonuclease I (473 aa).

Residues 9-188 form the Exonuclease domain; it reads IYDYESFGVN…AMADVYATIA (180 aa). Positions 11, 13, and 182 each coordinate Mg(2+). Glu13 provides a ligand contact to substrate. The region spanning 198–353 is the ExoI SH3-like domain; that stretch reads PKLFQYFFEN…KVADIFNEER (156 aa). The ExoI C-terminal domain occupies 356–472; it reads ASNDNVETEL…QVYEYGIKLL (117 aa).

As to quaternary structure, monomer. Interacts with ssb (via C-terminus); this interaction stimulates the exonuclease activity by recruiting the enzyme to its substrate. It depends on Mg(2+) as a cofactor.

The catalysed reaction is Exonucleolytic cleavage in the 3'- to 5'-direction to yield nucleoside 5'-phosphates.. In terms of biological role, degrades single-stranded DNA (ssDNA) in a highly processive manner. Also functions as a DNA deoxyribophosphodiesterase that releases deoxyribose-phosphate moieties following the cleavage of DNA at an apurinic/apyrimidinic (AP) site by either an AP endonuclease or AP lyase. Involved in genome maintenance but probably not in phase variation, which contributes to the virulence and disease. This is Exodeoxyribonuclease I (sbcB) from Haemophilus influenzae (strain ATCC 51907 / DSM 11121 / KW20 / Rd).